A 122-amino-acid chain; its full sequence is Large ribosomal subunit protein uL14 (122 aa).

It belongs to the universal ribosomal protein uL14 family. Part of the 50S ribosomal subunit. Forms a cluster with proteins L3 and L19. In the 70S ribosome, L14 and L19 interact and together make contacts with the 16S rRNA in bridges B5 and B8.

Binds to 23S rRNA. Forms part of two intersubunit bridges in the 70S ribosome. The polypeptide is Large ribosomal subunit protein uL14 (Staphylococcus haemolyticus (strain JCSC1435)).